The primary structure comprises 246 residues: Ribonuclease 3 (246 aa).

One can recognise an RNase III domain in the interval 16–146 (ATELEAGIGY…LLAAVYLDGG (131 aa)). Glu-59 serves as a coordination point for Mg(2+). The active site involves Asp-63. The Mg(2+) site is built by Asn-132 and Glu-135. Glu-135 is a catalytic residue. The DRBM domain occupies 173–242 (DFKTEFQEMV…ARQVLARFAA (70 aa)).

It belongs to the ribonuclease III family. As to quaternary structure, homodimer. Requires Mg(2+) as cofactor.

The protein resides in the cytoplasm. The catalysed reaction is Endonucleolytic cleavage to 5'-phosphomonoester.. Its function is as follows. Digests double-stranded RNA. Involved in the processing of primary rRNA transcript to yield the immediate precursors to the large and small rRNAs (23S and 16S). Processes some mRNAs, and tRNAs when they are encoded in the rRNA operon. Processes pre-crRNA and tracrRNA of type II CRISPR loci if present in the organism. This chain is Ribonuclease 3, found in Geobacter metallireducens (strain ATCC 53774 / DSM 7210 / GS-15).